The chain runs to 120 residues: Dynein 11 kDa light chain, flagellar outer arm (120 aa).

The protein belongs to the dynein light chain family. In terms of assembly, consists of at least 3 heavy chains (alpha, beta and gamma), 2 intermediate chains and 8 light chains.

The protein resides in the cytoplasm. It localises to the cytoskeleton. It is found in the flagellum axoneme. This is Dynein 11 kDa light chain, flagellar outer arm from Chlamydomonas reinhardtii (Chlamydomonas smithii).